Consider the following 474-residue polypeptide: Variant surface glycoprotein MITAT 1.5 (474 aa).

A signal peptide spans 1–22 (MIHSNKVATVVLALISSWPADG). Disulfide bonds link Cys37–Cys161 and Cys144–Cys214. 2 N-linked (GlcNAc...) asparagine glycosylation sites follow: Asn74 and Asn95. An N-linked (GlcNAc...) asparagine glycan is attached at Asn329. The disordered stretch occupies residues 388-449 (AKDGEGQKNQ…ETDEPDKEKC (62 aa)). 2 stretches are compositionally biased toward basic and acidic residues: residues 414 to 423 (TNKEACEKEN) and 435 to 449 (KGKD…KEKC). Asn451 is lipidated: GPI-anchor amidated asparagine. Positions 452–474 (GSFLTSKQFAFSVVSAAFMALLF) are cleaved as a propeptide — removed in mature form.

It localises to the cell membrane. In terms of biological role, VSG forms a coat on the surface of the parasite. The trypanosome evades the immune response of the host by expressing a series of antigenically distinct VSGs from an estimated 1000 VSG genes. This Trypanosoma brucei brucei protein is Variant surface glycoprotein MITAT 1.5.